Consider the following 382-residue polypeptide: Galactokinase (382 aa).

34–37 lines the substrate pocket; it reads EHTD. 124-130 is an ATP binding site; the sequence is GAGLSSS. Serine 130 and glutamate 162 together coordinate Mg(2+). Catalysis depends on aspartate 174, which acts as the Proton acceptor. Tyrosine 223 contributes to the substrate binding site.

This sequence belongs to the GHMP kinase family. GalK subfamily.

It is found in the cytoplasm. The enzyme catalyses alpha-D-galactose + ATP = alpha-D-galactose 1-phosphate + ADP + H(+). The protein operates within carbohydrate metabolism; galactose metabolism. Its function is as follows. Catalyzes the transfer of the gamma-phosphate of ATP to D-galactose to form alpha-D-galactose-1-phosphate (Gal-1-P). In Shigella flexneri serotype 5b (strain 8401), this protein is Galactokinase.